The following is a 515-amino-acid chain: Histidine ammonia-lyase (515 aa).

A cross-link (5-imidazolinone (Ala-Gly)) is located at residues 148 to 150 (ASG). S149 carries the post-translational modification 2,3-didehydroalanine (Ser).

This sequence belongs to the PAL/histidase family. Post-translationally, contains an active site 4-methylidene-imidazol-5-one (MIO), which is formed autocatalytically by cyclization and dehydration of residues Ala-Ser-Gly.

The protein localises to the cytoplasm. The catalysed reaction is L-histidine = trans-urocanate + NH4(+). Its pathway is amino-acid degradation; L-histidine degradation into L-glutamate; N-formimidoyl-L-glutamate from L-histidine: step 1/3. The protein is Histidine ammonia-lyase of Pseudomonas syringae pv. tomato (strain ATCC BAA-871 / DC3000).